A 323-amino-acid chain; its full sequence is HPr kinase/phosphorylase (323 aa).

Residues His-142 and Lys-163 contribute to the active site. 157–164 (GESGVGKS) is a binding site for ATP. Mg(2+) is bound at residue Ser-164. Residue Asp-181 is the Proton acceptor; for phosphorylation activity. Proton donor; for dephosphorylation activity of the active site. An important for the catalytic mechanism of both phosphorylation and dephosphorylation region spans residues 205–214 (LEVRGLGMLN). Glu-206 contacts Mg(2+). Arg-249 is an active-site residue. Residues 270 to 275 (PVAAGR) are important for the catalytic mechanism of dephosphorylation.

This sequence belongs to the HPrK/P family. In terms of assembly, homohexamer. Requires Mg(2+) as cofactor.

It catalyses the reaction [HPr protein]-L-serine + ATP = [HPr protein]-O-phospho-L-serine + ADP + H(+). The enzyme catalyses [HPr protein]-O-phospho-L-serine + phosphate + H(+) = [HPr protein]-L-serine + diphosphate. Catalyzes the ATP- as well as the pyrophosphate-dependent phosphorylation of a specific serine residue in HPr, a phosphocarrier protein of the phosphoenolpyruvate-dependent sugar phosphotransferase system (PTS). HprK/P also catalyzes the pyrophosphate-producing, inorganic phosphate-dependent dephosphorylation (phosphorolysis) of seryl-phosphorylated HPr (P-Ser-HPr). In Nitrosomonas europaea (strain ATCC 19718 / CIP 103999 / KCTC 2705 / NBRC 14298), this protein is HPr kinase/phosphorylase.